Here is a 327-residue protein sequence, read N- to C-terminus: Vacuolar protein sorting-associated protein 26A (327 aa).

The tract at residues 305 to 327 is disordered; the sequence is RNFHQRYESPEPRPSLSAEQPEM.

The protein belongs to the VPS26 family. As to quaternary structure, component of the heterotrimeric retromer cargo-selective complex (CSC) which is believed to associate with variable sorting nexins to form functionally distinct retromer complex variants.

Its subcellular location is the cytoplasm. It is found in the endosome membrane. The protein resides in the early endosome. In terms of biological role, acts as a component of the retromer cargo-selective complex (CSC). The CSC is believed to be the core functional component of retromer or respective retromer complex variants acting to prevent missorting of selected transmembrane cargo proteins into the lysosomal degradation pathway. Retromer mediates retrograde transport of cargo proteins from endosomes to the trans-Golgi network (TGN). The chain is Vacuolar protein sorting-associated protein 26A (vps26a) from Danio rerio (Zebrafish).